Consider the following 338-residue polypeptide: ATP synthase subunit a (338 aa).

A helical transmembrane segment spans residues 15 to 35 (IAVLVMPLLLGFGAPIYAAAE). The interval 45–66 (AAAVHTDEAHGEAGEHAEGGHG) is disordered. Positions 49 to 65 (HTDEAHGEAGEHAEGGH) are enriched in basic and acidic residues. 7 consecutive transmembrane segments (helical) span residues 109-129 (HVVFMWLAALILLLVFGYVGN), 174-194 (LLTVFVFILVLNLLGLIPYGA), 199-219 (NINVTLTLSVFTFFITQVSAI), 238-258 (ALWIIMIPIEVIGLFTKPFAL), 262-282 (LFANMTAGHIIILSLIFISFI), 287-307 (IVAIFVSVPFSIFIYLLEIFV), and 308-328 (SFLQAFIFTMLSALFIGLGSA).

Belongs to the ATPase A chain family. As to quaternary structure, F-type ATPases have 2 components, CF(1) - the catalytic core - and CF(0) - the membrane proton channel. CF(1) has five subunits: alpha(3), beta(3), gamma(1), delta(1), epsilon(1). CF(0) has four main subunits: a, b, b' and c.

The protein localises to the cell inner membrane. Functionally, key component of the proton channel; it plays a direct role in the translocation of protons across the membrane. The sequence is that of ATP synthase subunit a from Chlorobium phaeobacteroides (strain BS1).